Reading from the N-terminus, the 189-residue chain is UPF0398 protein lp_1753 (189 aa).

It belongs to the UPF0398 family.

The sequence is that of UPF0398 protein lp_1753 from Lactiplantibacillus plantarum (strain ATCC BAA-793 / NCIMB 8826 / WCFS1) (Lactobacillus plantarum).